An 87-amino-acid polypeptide reads, in one-letter code: Small ribosomal subunit protein bS20 (87 aa).

Belongs to the bacterial ribosomal protein bS20 family.

Functionally, binds directly to 16S ribosomal RNA. The chain is Small ribosomal subunit protein bS20 from Shigella flexneri.